A 363-amino-acid polypeptide reads, in one-letter code: MKVAISGGGTGGHVYPALALIRELKKVHPEAEFLYIGTEKGLEAGIVKREGIPFEAIEITGFKRSLSLENIKTVMRFLSGAKKSKQILRDFKPDVVIGTGGYVCGPVVYAAAKLKIPTLIHEQNSVAGLTNKFLSRYTDKVAICFEEVSDSFASEKIVFTGNPRASEVVGVDSEGALEAYGLVSGKPTVLVFGGSRGARGVNEAVEAILPEWNNRDFQLLYVTGDVHYEKIKDSLAELNLGYHISVQPFIYDMPKILNAVTLVVSRAGATTLAELTALGVPSILIPSPYVTANHQENNARALEKNNAAIVITEAELKNTNLMATVDSILNDETKLNGMKLSAKQMGRPDAAAKLVEAVLSIMK.

UDP-N-acetyl-alpha-D-glucosamine-binding positions include 10–12 (TGG), N124, S195, I250, and Q295.

The protein belongs to the glycosyltransferase 28 family. MurG subfamily.

The protein localises to the cell membrane. It catalyses the reaction di-trans,octa-cis-undecaprenyl diphospho-N-acetyl-alpha-D-muramoyl-L-alanyl-D-glutamyl-meso-2,6-diaminopimeloyl-D-alanyl-D-alanine + UDP-N-acetyl-alpha-D-glucosamine = di-trans,octa-cis-undecaprenyl diphospho-[N-acetyl-alpha-D-glucosaminyl-(1-&gt;4)]-N-acetyl-alpha-D-muramoyl-L-alanyl-D-glutamyl-meso-2,6-diaminopimeloyl-D-alanyl-D-alanine + UDP + H(+). Its pathway is cell wall biogenesis; peptidoglycan biosynthesis. In terms of biological role, cell wall formation. Catalyzes the transfer of a GlcNAc subunit on undecaprenyl-pyrophosphoryl-MurNAc-pentapeptide (lipid intermediate I) to form undecaprenyl-pyrophosphoryl-MurNAc-(pentapeptide)GlcNAc (lipid intermediate II). The protein is UDP-N-acetylglucosamine--N-acetylmuramyl-(pentapeptide) pyrophosphoryl-undecaprenol N-acetylglucosamine transferase of Listeria monocytogenes serotype 4a (strain HCC23).